A 316-amino-acid chain; its full sequence is ATP synthase gamma chain (316 aa).

It belongs to the ATPase gamma chain family. F-type ATPases have 2 components, CF(1) - the catalytic core - and CF(0) - the membrane proton channel. CF(1) has five subunits: alpha(3), beta(3), gamma(1), delta(1), epsilon(1). CF(0) has three main subunits: a, b and c.

The protein resides in the cellular thylakoid membrane. In terms of biological role, produces ATP from ADP in the presence of a proton gradient across the membrane. The gamma chain is believed to be important in regulating ATPase activity and the flow of protons through the CF(0) complex. The polypeptide is ATP synthase gamma chain (Prochlorococcus marinus subsp. pastoris (strain CCMP1986 / NIES-2087 / MED4)).